The primary structure comprises 198 residues: Ribonuclease HII (198 aa).

In terms of domain architecture, RNase H type-2 spans 11–198 (TCIAGVDEVG…APVKRALGLA (188 aa)). D17, E18, and D109 together coordinate a divalent metal cation.

It belongs to the RNase HII family. Mn(2+) serves as cofactor. Requires Mg(2+) as cofactor.

It localises to the cytoplasm. It carries out the reaction Endonucleolytic cleavage to 5'-phosphomonoester.. In terms of biological role, endonuclease that specifically degrades the RNA of RNA-DNA hybrids. The sequence is that of Ribonuclease HII from Pectobacterium carotovorum subsp. carotovorum (strain PC1).